Here is a 273-residue protein sequence, read N- to C-terminus: Formamidopyrimidine-DNA glycosylase (273 aa).

P2 acts as the Schiff-base intermediate with DNA in catalysis. The active-site Proton donor is E3. The active-site Proton donor; for beta-elimination activity is K58. Residues H91 and R110 each coordinate DNA. An FPG-type zinc finger spans residues 238–272 (QVYGKTGQPCPRCASMIVKIKLGGRGTHLCPHCQK). The active-site Proton donor; for delta-elimination activity is the R262.

The protein belongs to the FPG family. As to quaternary structure, monomer. The cofactor is Zn(2+).

It carries out the reaction Hydrolysis of DNA containing ring-opened 7-methylguanine residues, releasing 2,6-diamino-4-hydroxy-5-(N-methyl)formamidopyrimidine.. The catalysed reaction is 2'-deoxyribonucleotide-(2'-deoxyribose 5'-phosphate)-2'-deoxyribonucleotide-DNA = a 3'-end 2'-deoxyribonucleotide-(2,3-dehydro-2,3-deoxyribose 5'-phosphate)-DNA + a 5'-end 5'-phospho-2'-deoxyribonucleoside-DNA + H(+). Functionally, involved in base excision repair of DNA damaged by oxidation or by mutagenic agents. Acts as a DNA glycosylase that recognizes and removes damaged bases. Has a preference for oxidized purines, such as 7,8-dihydro-8-oxoguanine (8-oxoG). Has AP (apurinic/apyrimidinic) lyase activity and introduces nicks in the DNA strand. Cleaves the DNA backbone by beta-delta elimination to generate a single-strand break at the site of the removed base with both 3'- and 5'-phosphates. The sequence is that of Formamidopyrimidine-DNA glycosylase from Streptococcus thermophilus (strain ATCC BAA-250 / LMG 18311).